Here is a 142-residue protein sequence, read N- to C-terminus: Large ribosomal subunit protein uL11 (142 aa).

Belongs to the universal ribosomal protein uL11 family. In terms of assembly, part of the ribosomal stalk of the 50S ribosomal subunit. Interacts with L10 and the large rRNA to form the base of the stalk. L10 forms an elongated spine to which L12 dimers bind in a sequential fashion forming a multimeric L10(L12)X complex. Post-translationally, one or more lysine residues are methylated.

Functionally, forms part of the ribosomal stalk which helps the ribosome interact with GTP-bound translation factors. This Gamma-proteobacterium EBAC31A08 protein is Large ribosomal subunit protein uL11.